The primary structure comprises 370 residues: Putative transposase InsL for insertion sequence element IS186A (370 aa).

This sequence belongs to the transposase 11 family.

Functionally, involved in the transposition of the insertion sequence IS186. In Escherichia coli (strain K12), this protein is Putative transposase InsL for insertion sequence element IS186A (insL1).